The sequence spans 368 residues: DNA integrity scanning protein DisA (368 aa).

Residues 15–153 (DERLRATLAA…DGRRHVLDEP (139 aa)) enclose the DAC domain. ATP-binding positions include Gly82, Leu100, and 113–117 (TRHRS). The interval 101–121 (QPDPSIPTNESGTRHRSAERT) is disordered. The span at 112 to 121 (GTRHRSAERT) shows a compositional bias: basic and acidic residues.

The protein belongs to the DisA family. Homooctamer. The cofactor is Mg(2+).

The enzyme catalyses 2 ATP = 3',3'-c-di-AMP + 2 diphosphate. In terms of biological role, participates in a DNA-damage check-point. DisA forms globular foci that rapidly scan along the chromosomes searching for lesions. Functionally, also has diadenylate cyclase activity, catalyzing the condensation of 2 ATP molecules into cyclic di-AMP (c-di-AMP). c-di-AMP likely acts as a signaling molecule that may couple DNA integrity with a cellular process. The sequence is that of DNA integrity scanning protein DisA from Acidothermus cellulolyticus (strain ATCC 43068 / DSM 8971 / 11B).